A 233-amino-acid polypeptide reads, in one-letter code: Achaete-scute homolog 1 (233 aa).

2 disordered regions span residues 1–24 (MESS…FLPP) and 39–95 (AAAA…ELMR). Residues 39–62 (AAAAAAQSAQQQQQQQAPQQQAPQ) show a composition bias toward low complexity. Over residues 78 to 87 (SAAKQVKRQR) the composition is skewed to basic residues. The bHLH domain occupies 115–167 (AAVARRNERERNRVKLVNLGFATLREHVPNGAANKKMSKVETLRSAVEYIRAL). An N6-acetyllysine modification is found at lysine 153.

Efficient DNA binding requires dimerization with another bHLH protein. Forms a heterodimer with TCF3. In terms of tissue distribution, developing CNS and PNS at embryonic and postnatal stages.

Its subcellular location is the nucleus. In terms of biological role, transcription factor that plays a key role in neuronal differentiation: acts as a pioneer transcription factor, accessing closed chromatin to allow other factors to bind and activate neural pathways. Directly binds the E box motif (5'-CANNTG-3') on promoters and promotes transcription of neuronal genes. The combination of three transcription factors, ASCL1, POU3F2/BRN2 and MYT1L, is sufficient to reprogram fibroblasts and other somatic cells into induced neuronal (iN) cells in vitro. Plays a role at early stages of development of specific neural lineages in most regions of the CNS, and of several lineages in the PNS. Essential for the generation of olfactory and autonomic neurons. Acts synergistically with FOXN4 to specify the identity of V2b neurons rather than V2a from bipotential p2 progenitors during spinal cord neurogenesis, probably through DLL4-NOTCH signaling activation. Involved in the regulation of neuroendocrine cell development in the glandular stomach. This chain is Achaete-scute homolog 1 (Ascl1), found in Rattus norvegicus (Rat).